The following is a 309-amino-acid chain: Oxygen-dependent coproporphyrinogen-III oxidase (309 aa).

A substrate-binding site is contributed by S94. Residues H98 and H108 each contribute to the a divalent metal cation site. H108 serves as the catalytic Proton donor. A substrate-binding site is contributed by 110–112; the sequence is NVR. The a divalent metal cation site is built by H147 and H177. Residues 242–277 are important for dimerization; that stretch reads YVEFNLVWDRGTLFGLQTGGRTESILMSLPPLVRWE. 260-262 contacts substrate; that stretch reads GGR.

The protein belongs to the aerobic coproporphyrinogen-III oxidase family. As to quaternary structure, homodimer. Requires a divalent metal cation as cofactor.

The protein localises to the cytoplasm. The enzyme catalyses coproporphyrinogen III + O2 + 2 H(+) = protoporphyrinogen IX + 2 CO2 + 2 H2O. Its pathway is porphyrin-containing compound metabolism; protoporphyrin-IX biosynthesis; protoporphyrinogen-IX from coproporphyrinogen-III (O2 route): step 1/1. Its function is as follows. Involved in the heme biosynthesis. Catalyzes the aerobic oxidative decarboxylation of propionate groups of rings A and B of coproporphyrinogen-III to yield the vinyl groups in protoporphyrinogen-IX. This chain is Oxygen-dependent coproporphyrinogen-III oxidase, found in Yersinia pseudotuberculosis serotype O:1b (strain IP 31758).